A 191-amino-acid polypeptide reads, in one-letter code: Protein G1-like1 (191 aa).

The interval 1–29 (MDMIGMASPAESPGGGGTARPSRYESQKR) is disordered. The ALOG domain maps to 23-150 (RYESQKRRDW…ARGIAYEKKR (128 aa)). The Nuclear localization signal motif lies at 148–152 (KKRRK). Residues 152–179 (KRAAASHTKQKQQQQQLVEQAAAAAEAH) are a coiled coil.

The protein belongs to the plant homeotic and developmental regulators ALOG protein family.

The protein localises to the nucleus. In terms of biological role, probable transcription regulator that acts as a developmental regulator by promoting cell growth in response to light. The protein is Protein G1-like1 of Oryza sativa subsp. indica (Rice).